Consider the following 716-residue polypeptide: Polyribonucleotide nucleotidyltransferase (716 aa).

The Mg(2+) site is built by D495 and D501. Residues 562–621 enclose the KH domain; that stretch reads PRLFRIQINPEQIGLVIGPGGKTIRSITEQTGAKIDIEDTGAVTISAVDADSALRAKSII. The region spanning 631–699 is the S1 motif domain; it reads GDVYIGKVTR…QKGRVNLTRK (69 aa).

The protein belongs to the polyribonucleotide nucleotidyltransferase family. It depends on Mg(2+) as a cofactor.

The protein localises to the cytoplasm. The catalysed reaction is RNA(n+1) + phosphate = RNA(n) + a ribonucleoside 5'-diphosphate. Involved in mRNA degradation. Catalyzes the phosphorolysis of single-stranded polyribonucleotides processively in the 3'- to 5'-direction. The polypeptide is Polyribonucleotide nucleotidyltransferase (Synechococcus elongatus (strain ATCC 33912 / PCC 7942 / FACHB-805) (Anacystis nidulans R2)).